A 596-amino-acid chain; its full sequence is ATP-binding protein Uup (596 aa).

2 consecutive ABC transporter domains span residues 1–222 and 290–516; these read MSLI…RIEK and FKLD…SKIN. ATP contacts are provided by residues 36 to 43 and 322 to 329; these read GKNGAGKS and GDNGCGKS. Positions 519 to 596 are C-terminal domain (CTD), binds DNA; that stretch reads IKIKNNFKKE…LEKNIINTKI (78 aa).

It belongs to the ABC transporter superfamily. ABCF family. Uup subfamily.

Its subcellular location is the cytoplasm. It catalyses the reaction ATP + H2O = ADP + phosphate + H(+). Probably plays a role in ribosome assembly or function. May be involved in resolution of branched DNA intermediates that result from template switching in postreplication gaps. Binds DNA and has ATPase activity. This Buchnera aphidicola subsp. Acyrthosiphon pisum (strain APS) (Acyrthosiphon pisum symbiotic bacterium) protein is ATP-binding protein Uup.